Reading from the N-terminus, the 401-residue chain is Elongation factor Tu (401 aa).

The 202-residue stretch at 10 to 211 (KPHLNIGTIG…AVDTYVPNPT (202 aa)) folds into the tr-type G domain. The G1 stretch occupies residues 19-26 (GHVDHGKT). 19–26 (GHVDHGKT) provides a ligand contact to GTP. A Mg(2+)-binding site is contributed by T26. Residues 62-66 (GITIA) form a G2 region. A G3 region spans residues 83-86 (DCPG). Residues 83–87 (DCPGH) and 138–141 (NKAD) each bind GTP. Residues 138–141 (NKAD) form a G4 region. The G5 stretch occupies residues 179–181 (SAL).

Belongs to the TRAFAC class translation factor GTPase superfamily. Classic translation factor GTPase family. EF-Tu/EF-1A subfamily. Monomer.

The protein resides in the cytoplasm. It carries out the reaction GTP + H2O = GDP + phosphate + H(+). In terms of biological role, GTP hydrolase that promotes the GTP-dependent binding of aminoacyl-tRNA to the A-site of ribosomes during protein biosynthesis. In Leptospira biflexa serovar Patoc (strain Patoc 1 / Ames), this protein is Elongation factor Tu.